The sequence spans 398 residues: Succinate--CoA ligase [ADP-forming] subunit beta (398 aa).

In terms of domain architecture, ATP-grasp spans 9 to 253; the sequence is KEILASYGVR…IREENPIEVE (245 aa). Residues K50, 57–59, V106, and E116 each bind ATP; that span reads GRG. 2 residues coordinate Mg(2+): N208 and D222. Substrate is bound by residues N273 and 330–332; that span reads GIV.

This sequence belongs to the succinate/malate CoA ligase beta subunit family. Heterotetramer of two alpha and two beta subunits. It depends on Mg(2+) as a cofactor.

It catalyses the reaction succinate + ATP + CoA = succinyl-CoA + ADP + phosphate. The catalysed reaction is GTP + succinate + CoA = succinyl-CoA + GDP + phosphate. It functions in the pathway carbohydrate metabolism; tricarboxylic acid cycle; succinate from succinyl-CoA (ligase route): step 1/1. Succinyl-CoA synthetase functions in the citric acid cycle (TCA), coupling the hydrolysis of succinyl-CoA to the synthesis of either ATP or GTP and thus represents the only step of substrate-level phosphorylation in the TCA. The beta subunit provides nucleotide specificity of the enzyme and binds the substrate succinate, while the binding sites for coenzyme A and phosphate are found in the alpha subunit. The protein is Succinate--CoA ligase [ADP-forming] subunit beta of Flavobacterium psychrophilum (strain ATCC 49511 / DSM 21280 / CIP 103535 / JIP02/86).